Reading from the N-terminus, the 269-residue chain is Dermonecrotic toxin SpeSicTox-betaIB3 (269 aa).

Residue histidine 5 is part of the active site. 2 residues coordinate Mg(2+): glutamate 25 and aspartate 27. Histidine 41 serves as the catalytic Nucleophile. 2 cysteine pairs are disulfide-bonded: cysteine 45–cysteine 51 and cysteine 47–cysteine 191. Position 85 (aspartate 85) interacts with Mg(2+).

It belongs to the arthropod phospholipase D family. Class II subfamily. Mg(2+) serves as cofactor. Expressed by the venom gland.

It is found in the secreted. It catalyses the reaction an N-(acyl)-sphingosylphosphocholine = an N-(acyl)-sphingosyl-1,3-cyclic phosphate + choline. The enzyme catalyses an N-(acyl)-sphingosylphosphoethanolamine = an N-(acyl)-sphingosyl-1,3-cyclic phosphate + ethanolamine. It carries out the reaction a 1-acyl-sn-glycero-3-phosphocholine = a 1-acyl-sn-glycero-2,3-cyclic phosphate + choline. The catalysed reaction is a 1-acyl-sn-glycero-3-phosphoethanolamine = a 1-acyl-sn-glycero-2,3-cyclic phosphate + ethanolamine. Its function is as follows. Dermonecrotic toxins cleave the phosphodiester linkage between the phosphate and headgroup of certain phospholipids (sphingolipid and lysolipid substrates), forming an alcohol (often choline) and a cyclic phosphate. This toxin acts on sphingomyelin (SM). It may also act on ceramide phosphoethanolamine (CPE), lysophosphatidylcholine (LPC) and lysophosphatidylethanolamine (LPE), but not on lysophosphatidylserine (LPS), and lysophosphatidylglycerol (LPG). It acts by transphosphatidylation, releasing exclusively cyclic phosphate products as second products. Induces dermonecrosis, hemolysis, increased vascular permeability, edema, inflammatory response, and platelet aggregation. This Sicarius peruensis (Six-eyed sand spider) protein is Dermonecrotic toxin SpeSicTox-betaIB3.